Reading from the N-terminus, the 462-residue chain is GTPase Der (462 aa).

EngA-type G domains follow at residues 3–166 (PVIA…TTET) and 175–348 (IKIA…HSAI). GTP-binding positions include 9–16 (GRPNVGKS), 56–60 (DTGGI), 118–121 (NKTD), 181–188 (GRPNVGKS), 228–232 (DTAGV), and 293–296 (NKWD). Residues 349-433 (QSFSTPKLTR…PLKIEFKGGQ (85 aa)) enclose the KH-like domain.

This sequence belongs to the TRAFAC class TrmE-Era-EngA-EngB-Septin-like GTPase superfamily. EngA (Der) GTPase family. In terms of assembly, associates with the 50S ribosomal subunit.

GTPase that plays an essential role in the late steps of ribosome biogenesis. This is GTPase Der from Legionella pneumophila (strain Paris).